The primary structure comprises 264 residues: Small ribosomal subunit protein uS3 (264 aa).

The KH type-2 domain occupies 39-107 (VREYLKKKLK…PVHVNIEEIR (69 aa)). Residues 214–264 (PVETAAPREEERRPRRAPRGDRPDGARNGRPGGGRGRAPRKADAAPAPEGE) are disordered. Residues 219 to 240 (APREEERRPRRAPRGDRPDGAR) show a composition bias toward basic and acidic residues.

The protein belongs to the universal ribosomal protein uS3 family. As to quaternary structure, part of the 30S ribosomal subunit. Forms a tight complex with proteins S10 and S14.

Binds the lower part of the 30S subunit head. Binds mRNA in the 70S ribosome, positioning it for translation. The protein is Small ribosomal subunit protein uS3 of Bordetella avium (strain 197N).